A 152-amino-acid polypeptide reads, in one-letter code: Heavy metal-associated isoprenylated plant protein 22 (152 aa).

Residues 28–91 (MQTVNIKVKI…TVQSTGKKKA (64 aa)) enclose the HMA domain. The a metal cation site is built by Cys39 and Cys42. Residues 123 to 152 (SEQAQAQPGSTDDKLMSLFSDENPNACTVM) are disordered. Over residues 142–152 (SDENPNACTVM) the composition is skewed to polar residues. Cys149 bears the Cysteine methyl ester mark. Residue Cys149 is the site of S-farnesyl cysteine attachment. A propeptide spans 150-152 (TVM) (removed in mature form).

Belongs to the HIPP family. In terms of assembly, interacts with ZHD11/HB29. As to expression, expressed in lateral roots and mature anthers.

It is found in the membrane. Heavy-metal-binding protein. Binds cadmium. May be involved in cadmium transport and play a role in cadmium detoxification. The sequence is that of Heavy metal-associated isoprenylated plant protein 22 from Arabidopsis thaliana (Mouse-ear cress).